We begin with the raw amino-acid sequence, 510 residues long: NAD(P)H-quinone oxidoreductase subunit 2 A, chloroplastic (510 aa).

The next 13 membrane-spanning stretches (helical) occupy residues 24–44 (LLLFDGSLIFPECILIFGLIL), 57–77 (IPWLYFISSTSLVMSITALLF), 99–119 (IFQFLILLCSTLCIPLSVEYI), 124–144 (MAITEFLLFVLTATLGGMFLC), 149–169 (LITIFVAPECFSLCSYLLSGY), 183–203 (YLLMGGASSSILVHGFSWLYG), 227–247 (PGISIALIFITVGIGFKLSPA), 295–315 (WHLLLEILAILSMILGNLIAI), 323–343 (MLAYSSIGQIGYVIIGIIVGD), 354–374 (YMLFYISMNLGTFACIVLFGL), 395–415 (ALSLALCLLSLGGLPPLAGFF), 418–438 (LYLFWCGWQAGLYFLVLIGLL), and 484–504 (MIVCVIASTIPGISMNPIIAI).

The protein belongs to the complex I subunit 2 family. In terms of assembly, NDH is composed of at least 16 different subunits, 5 of which are encoded in the nucleus.

The protein localises to the plastid. Its subcellular location is the chloroplast thylakoid membrane. The enzyme catalyses a plastoquinone + NADH + (n+1) H(+)(in) = a plastoquinol + NAD(+) + n H(+)(out). The catalysed reaction is a plastoquinone + NADPH + (n+1) H(+)(in) = a plastoquinol + NADP(+) + n H(+)(out). Functionally, NDH shuttles electrons from NAD(P)H:plastoquinone, via FMN and iron-sulfur (Fe-S) centers, to quinones in the photosynthetic chain and possibly in a chloroplast respiratory chain. The immediate electron acceptor for the enzyme in this species is believed to be plastoquinone. Couples the redox reaction to proton translocation, and thus conserves the redox energy in a proton gradient. The chain is NAD(P)H-quinone oxidoreductase subunit 2 A, chloroplastic from Solanum lycopersicum (Tomato).